The following is a 383-amino-acid chain: UDP-N-acetylglucosamine--N-acetylmuramyl-(pentapeptide) pyrophosphoryl-undecaprenol N-acetylglucosamine transferase (383 aa).

Residues 11–13, N125, R166, S191, I246, and Q291 contribute to the UDP-N-acetyl-alpha-D-glucosamine site; that span reads TGG. Residues 364-383 form a disordered region; that stretch reads PNGRERTPIEAEKKAPRSNS. Residues 366 to 383 show a composition bias toward basic and acidic residues; sequence GRERTPIEAEKKAPRSNS.

Belongs to the glycosyltransferase 28 family. MurG subfamily.

It is found in the cell inner membrane. It catalyses the reaction di-trans,octa-cis-undecaprenyl diphospho-N-acetyl-alpha-D-muramoyl-L-alanyl-D-glutamyl-meso-2,6-diaminopimeloyl-D-alanyl-D-alanine + UDP-N-acetyl-alpha-D-glucosamine = di-trans,octa-cis-undecaprenyl diphospho-[N-acetyl-alpha-D-glucosaminyl-(1-&gt;4)]-N-acetyl-alpha-D-muramoyl-L-alanyl-D-glutamyl-meso-2,6-diaminopimeloyl-D-alanyl-D-alanine + UDP + H(+). The protein operates within cell wall biogenesis; peptidoglycan biosynthesis. In terms of biological role, cell wall formation. Catalyzes the transfer of a GlcNAc subunit on undecaprenyl-pyrophosphoryl-MurNAc-pentapeptide (lipid intermediate I) to form undecaprenyl-pyrophosphoryl-MurNAc-(pentapeptide)GlcNAc (lipid intermediate II). The sequence is that of UDP-N-acetylglucosamine--N-acetylmuramyl-(pentapeptide) pyrophosphoryl-undecaprenol N-acetylglucosamine transferase from Myxococcus xanthus (strain DK1622).